We begin with the raw amino-acid sequence, 192 residues long: Calcium-binding protein K (192 aa).

EF-hand domains are found at residues 60–95 (WDEA…MAKA) and 96–131 (PTLD…VVCC). Positions 73, 75, 77, 84, 109, 111, 113, 115, and 120 each coordinate Ca(2+).

It belongs to the recoverin family.

The protein is Calcium-binding protein K (cbpK) of Dictyostelium discoideum (Social amoeba).